The primary structure comprises 389 residues: Alanine racemase TOXG (389 aa).

K235 carries the post-translational modification N6-(pyridoxal phosphate)lysine.

This sequence belongs to the threonine aldolase family. Pyridoxal 5'-phosphate is required as a cofactor.

The catalysed reaction is L-alanine = D-alanine. The protein operates within mycotoxin biosynthesis; HC-toxin biosynthesis. In terms of biological role, alanine racemase, part of the diffuse TOX2 gene cluster that mediates the biosynthesis of the HC-toxin, cyclic tetrapeptide of structure cyclo(D-Pro-L-Ala-D-Ala-L-Aeo), where Aeo stands for 2-amino-9,10-epoxi-8-oxodecanoic acid. HC-toxin is a determinant of specificity and virulence in the interaction between the producing fungus and its host, maize. TOXG catalyzes the conversion of L-alanine into D-alanine, an essential precursor for the production of the major forms of HC-toxin by the non-ribosomal peptide synthetase HTS1. The chain is Alanine racemase TOXG from Cochliobolus carbonum (Maize leaf spot fungus).